Reading from the N-terminus, the 665-residue chain is Target of rapamycin complex 2 subunit sin1 (665 aa).

Ser-62 carries the post-translational modification Phosphoserine. Polar residues-rich tracts occupy residues 65–83 and 100–109; these read IVANDTVSNVRKPSDTKQV and YATSDLSESS. Positions 65-112 are disordered; sequence IVANDTVSNVRKPSDTKQVNGAGGQVNHSRAEDSDYATSDLSESSDVG. Ser-133 carries the post-translational modification Phosphoserine. A CRIM domain is found at 255 to 392; that stretch reads TSALRALLEH…ATPAQIKENQ (138 aa). The interval 395–433 is disordered; sequence YPFKSKHPTSIPEANNKTHIRHTSSTSSQSQKQAQDVKD. 4 positions are modified to phosphoserine: Ser-404, Ser-490, Ser-502, and Ser-530. Positions 517 to 537 are disordered; the sequence is RDKKGSTQQLPTSSPQNSVYG. Over residues 522–536 the composition is skewed to polar residues; it reads STQQLPTSSPQNSVY. The SIN1-type PH domain maps to 558–659; that stretch reads TYQEFLVWKR…IVSRIRALMN (102 aa).

Belongs to the SIN1 family. As to quaternary structure, the target of rapamycin complex 2 (TORC2) is composed of at least bit61, pop3/wat1, sin1, ste20 and tor1. Interacts with the sty1 MAP kinase. Post-translationally, phosphorylated; under environmental stress. Either Ser-61 or Ser-62 and Ser-298, Ser-299 or Ser-301 are phosphorylated as well.

Its function is as follows. Component of the mechanistic target of rapamycin complex 2 (mTORC2), which regulates multiple cellular processes to control cell growth in response to environmental signals. In response to signals, TORC2 phosphorylates AGC protein kinase family members, such as gad8. TORC2 is required for cell survival under various stress conditions. TORC2 positively controls G1 cell-cycle arrest, sexual development and amino acid uptake. Positively regulates amino acid uptake through the control of expression of amino acid permeases. Within the mTORC2 complex, sin1 acts as a substrate adapter which recognizes and binds AGC protein kinase family members for phosphorylation by tor1. This Schizosaccharomyces pombe (strain 972 / ATCC 24843) (Fission yeast) protein is Target of rapamycin complex 2 subunit sin1.